The sequence spans 90 residues: MSILPTTDSVPEEAITKASGDVDGFEKAVVGGVIAAVFITLITVVVLITVYLYKHKGSYRTNENLEDVEASKTLQMEDSALTPEKKEYFM.

At 1–27 (MSILPTTDSVPEEAITKASGDVDGFEK) the chain is on the extracellular side. The chain crosses the membrane as a helical; Signal-anchor for type III membrane protein span at residues 28 to 48 (AVVGGVIAAVFITLITVVVLI). Topologically, residues 49–90 (TVYLYKHKGSYRTNENLEDVEASKTLQMEDSALTPEKKEYFM) are cytoplasmic.

Belongs to the SMAGP family.

The protein localises to the cell membrane. It is found in the cytoplasmic vesicle membrane. Its function is as follows. May play a role in epithelial cell-cell contacts. The sequence is that of Small cell adhesion glycoprotein homolog (smagp) from Xenopus tropicalis (Western clawed frog).